Consider the following 401-residue polypeptide: Secreted LysM effector Blys8 (401 aa).

The first 19 residues, 1 to 19 (MRTLAIFFIGAAVAAHVSP), serve as a signal peptide directing secretion. Positions 42-89 (TYYDEAYDKSYTCDDLLSAWVISKQDFESWNPAVGSDCKLVLGHSYCV) constitute a LysM 1 domain. A compositionally biased stretch (low complexity) spans 98–136 (STTTTTTTSTTTKTTTKTTTTTTAAPKPTSSAPSGPSPT). The disordered stretch occupies residues 98–137 (STTTTTTTSTTTKTTTKTTTTTTAAPKPTSSAPSGPSPTQ). In terms of domain architecture, LysM 2 spans 146–193 (AYYFVKAGDTCDKISQMYGTFSTAQFIEWNPAVGSSCTGLWAGYYYCV). Residues 201-223 (SRTSTAGPTSTKPANGVTTPQPT) are disordered. The LysM 3 domain occupies 233-279 (QFVYVQPGDQCGTVASRAGVSLSDFLQWNPSTGKDCSGLWANAYACV).

This sequence belongs to the secreted LysM effector family.

Functionally, might have a role in sequestration of chitin oligosaccharides (breakdown products of fungal cell walls that are released during invasion and act as triggers of host immunity) to dampen host defense. In Beauveria bassiana (strain ARSEF 2860) (White muscardine disease fungus), this protein is Secreted LysM effector Blys8.